The primary structure comprises 300 residues: DNA repair protein PprA (300 aa).

Residue T88 is modified to Phosphothreonine. S128 carries the phosphoserine modification. T160 carries the post-translational modification Phosphothreonine.

Phosphorylated by RqkA in vitro. Phosphorylated primarily at Thr-88, and to a little extent at Ser-128 and Thr-160.

Its activity is regulated as follows. Phosphorylation increases DNA binding affinity. In terms of biological role, dsDNA-binding protein that contributes to the ionizing radiation resistance of D.radiodurans. Plays a role in DNA repair and genome reconstitution, and is necessary for recovery from severe genomic fragmentation as a result of exposure to severe levels of ionizing radiation. In vitro, binds to double-stranded DNA carrying strand breaks and stimulates the DNA end-joining reaction catalyzed by DNA ligases. Thus, PprA plays a critical role in a non-homologous end-joining (NHEJ) pathway for the repair of radiation-induced DNA double-strands breaks. Cannot bind to dsDNA without strand breaks or single-stranded DNA. The protein is DNA repair protein PprA (pprA) of Deinococcus radiodurans (strain ATCC 13939 / DSM 20539 / JCM 16871 / CCUG 27074 / LMG 4051 / NBRC 15346 / NCIMB 9279 / VKM B-1422 / R1).